Reading from the N-terminus, the 975-residue chain is Glycine dehydrogenase (decarboxylating) (975 aa).

An N6-(pyridoxal phosphate)lysine modification is found at Lys723.

It belongs to the GcvP family. The glycine cleavage system is composed of four proteins: P, T, L and H. Pyridoxal 5'-phosphate serves as cofactor.

The catalysed reaction is N(6)-[(R)-lipoyl]-L-lysyl-[glycine-cleavage complex H protein] + glycine + H(+) = N(6)-[(R)-S(8)-aminomethyldihydrolipoyl]-L-lysyl-[glycine-cleavage complex H protein] + CO2. Its function is as follows. The glycine cleavage system catalyzes the degradation of glycine. The P protein binds the alpha-amino group of glycine through its pyridoxal phosphate cofactor; CO(2) is released and the remaining methylamine moiety is then transferred to the lipoamide cofactor of the H protein. The chain is Glycine dehydrogenase (decarboxylating) from Burkholderia pseudomallei (strain 668).